A 316-amino-acid polypeptide reads, in one-letter code: Pantothenate kinase (316 aa).

Residue 95 to 102 (GSVAVGKS) coordinates ATP.

It belongs to the prokaryotic pantothenate kinase family.

It is found in the cytoplasm. It carries out the reaction (R)-pantothenate + ATP = (R)-4'-phosphopantothenate + ADP + H(+). The protein operates within cofactor biosynthesis; coenzyme A biosynthesis; CoA from (R)-pantothenate: step 1/5. The protein is Pantothenate kinase of Shewanella loihica (strain ATCC BAA-1088 / PV-4).